A 277-amino-acid chain; its full sequence is Large ribosomal subunit protein uL2c (277 aa).

The disordered stretch occupies residues 226–249; it reads NPIDHPHGGGEGRAPIGREKPLTP. Over residues 229–246 the composition is skewed to basic and acidic residues; sequence DHPHGGGEGRAPIGREKP.

The protein belongs to the universal ribosomal protein uL2 family. In terms of assembly, part of the 50S ribosomal subunit.

It localises to the plastid. It is found in the chloroplast. In Physcomitrium patens (Spreading-leaved earth moss), this protein is Large ribosomal subunit protein uL2c (rpl2).